A 599-amino-acid polypeptide reads, in one-letter code: Sodium-dependent phosphate transport protein 2C (599 aa).

At 1-76 (MPSSLPGSQV…RRVAGSVLKA (76 aa)) the chain is on the cytoplasmic side. Ser4 is modified (phosphoserine). The chain crosses the membrane as a helical span at residues 77 to 97 (CGLLGSLYFFICSLDVLSSAF). Topologically, residues 98–111 (QLLGSKVAGDIFKD) are extracellular. Residues 112 to 132 (NVVLSNPVAGLVIGVLVTALV) form a helical membrane-spanning segment. Residues 133-188 (QSSSTSSSIVVSMVAAKLLTVRVSVPIIMGVNVGTSITSTLVSMAQSGDRDEFQRA) lie on the Cytoplasmic side of the membrane. The chain crosses the membrane as a helical span at residues 189–209 (FSGSAVHGIFNWLTVLVLLPL). At 210-322 (ESATALLERL…FAGTELTDLA (113 aa)) the chain is on the extracellular side. N-linked (GlcNAc...) asparagine glycans are attached at residues Asn265, Asn268, Asn286, and Asn299. An intrachain disulfide couples Cys276 to Cys309. The chain crosses the membrane as a helical span at residues 323-343 (VGCILLAGSLLVLCGCLVLIV). The Cytoplasmic portion of the chain corresponds to 344–367 (KLLNSVLRGRVAQVVRTVINADFP). The helical transmembrane segment at 368 to 388 (FPLGWLGGYLAVLAGAGLTFA) threads the bilayer. Over 389–445 (LQSSSVFTAAVVPLMGVGVISLDRAYPLLLGSNIGTTTTALLAALASPADRMLSALQ) the chain is Extracellular. Residues 446 to 466 (VALIHFFFNLAGILLWYLVPA) form a helical membrane-spanning segment. The Cytoplasmic segment spans residues 467 to 485 (LRLPIPLARHFGVVTARYR). A helical transmembrane segment spans residues 486–506 (WVAGVYLLLGFLLLPLAAFGL). The Extracellular segment spans residues 507–510 (SLAG). The chain crosses the membrane as a helical span at residues 511–531 (GMELAAVGGPLVGLVLLVILV). Residues 532 to 599 (TVLQRRRPAW…NPEILASQQL (68 aa)) lie on the Cytoplasmic side of the membrane.

This sequence belongs to the SLC34A transporter family. As to expression, expressed only in the kidney.

The protein localises to the apical cell membrane. The enzyme catalyses 2 Na(+)(out) + phosphate(out) = 2 Na(+)(in) + phosphate(in). Functionally, involved in actively transporting phosphate into cells via Na(+) cotransport in the renal brush border membrane. The cotransport has a Na(+):Pi stoichiometry of 2:1 and is electroneutral. This Homo sapiens (Human) protein is Sodium-dependent phosphate transport protein 2C (SLC34A3).